The following is a 476-amino-acid chain: 8-amino-7-oxononanoate synthase (476 aa).

Residue arginine 24 participates in substrate binding. 171-172 (GF) contributes to the pyridoxal 5'-phosphate binding site. Histidine 210 contributes to the substrate binding site. Pyridoxal 5'-phosphate contacts are provided by residues serine 260, 285-288 (DDAH), and 316-319 (TLSK). The residue at position 319 (lysine 319) is an N6-(pyridoxal phosphate)lysine. Threonine 427 contacts substrate. The short motif at 474 to 476 (PKL) is the Peroxisomal targeting signal PTS1 element.

The protein belongs to the class-II pyridoxal-phosphate-dependent aminotransferase family. BioF subfamily. In terms of assembly, monomer. Pyridoxal 5'-phosphate serves as cofactor.

The protein localises to the cytoplasm. It is found in the cytosol. It localises to the peroxisome. The catalysed reaction is 6-carboxyhexanoyl-[ACP] + L-alanine + H(+) = (8S)-8-amino-7-oxononanoate + holo-[ACP] + CO2. The protein operates within cofactor biosynthesis; biotin biosynthesis; 8-amino-7-oxononanoate from pimeloyl-CoA: step 1/1. Catalyzes the decarboxylative condensation of pimeloyl-[acyl-carrier protein] and L-alanine to produce 8-amino-7-oxononanoate (AON), [acyl-carrier protein], and carbon dioxide. Required for the biosynthesis of D-biotin that prevents light-mediated cell death and modulates defense gene expression, probably by avoiding hydrogen peroxide H(2)O(2) accumulation. This Arabidopsis thaliana (Mouse-ear cress) protein is 8-amino-7-oxononanoate synthase.